Consider the following 649-residue polypeptide: MHLSEITHPNQLRNLSLSQLRSLARQIREKHLQTAANSPVGCHLGPGLGVVELTLALYKTLDLDRDKVIWDVGHQAYAHKMLTGRYHNFHTIRQKGGISGYLKRSESRFDHFGAGHASTSISAALGMAIARDRRGENFKVVAIIGDGALTGGMAYEAINHAGHLPKTNLMVILNDNGMSISPNVGAIPRYLNRLRLSPPVQFLADSLEEQLKNLPLVGSSLSPEIDRLKETVKLVTAVQNNKAGIIFEELGFTYVGPVDGHNLAELLDAFELAHGISGPVLVHVATVKGKGYPPAEAEQVSYHAQSRFDLATGKPYPPTKPTPPSYSKVFGHTLCKLAERDPRIIGITAAMDTGTGLDKLKEKLPDQFVDVGIAEQHAVTLAAGMACEGMRPVVAIYSTFLQRAYDQIIHDVCIQKLPVFFCLDRAGVVGADGPTHQGMYDIAYLRCIPEMVLMAPKDEAELQRMVVTGIQYTKGPIAMRYPRGAGVGVPLAEEGWEPIPIGKAEVLRSGGEVLILAYGSMVHPSLQAAEILKEHGISTTVVNARFAKPLDTELILPLAQQSRLVVTVEEGCLMGGFGSAVGEALLDADIRVPLLRLGVPDVWVEHATPEESLAELGLNSVGIAERIRAKVEALQGQRASQAQAILGSS.

Thiamine diphosphate contacts are provided by residues His-74 and 115-117 (GHA). Mg(2+) is bound at residue Asp-146. Thiamine diphosphate is bound by residues 147–148 (GA), Asn-176, Tyr-292, and Glu-375. Residue Asn-176 coordinates Mg(2+).

The protein belongs to the transketolase family. DXPS subfamily. As to quaternary structure, homodimer. It depends on Mg(2+) as a cofactor. Requires thiamine diphosphate as cofactor.

The enzyme catalyses D-glyceraldehyde 3-phosphate + pyruvate + H(+) = 1-deoxy-D-xylulose 5-phosphate + CO2. It functions in the pathway metabolic intermediate biosynthesis; 1-deoxy-D-xylulose 5-phosphate biosynthesis; 1-deoxy-D-xylulose 5-phosphate from D-glyceraldehyde 3-phosphate and pyruvate: step 1/1. In terms of biological role, catalyzes the acyloin condensation reaction between C atoms 2 and 3 of pyruvate and glyceraldehyde 3-phosphate to yield 1-deoxy-D-xylulose-5-phosphate (DXP). The sequence is that of 1-deoxy-D-xylulose-5-phosphate synthase from Synechococcus sp. (strain JA-3-3Ab) (Cyanobacteria bacterium Yellowstone A-Prime).